A 324-amino-acid polypeptide reads, in one-letter code: DGAT1/2-independent enzyme synthesizing storage lipids (324 aa).

The Lumenal portion of the chain corresponds to 1–50; the sequence is MIDKNQTCGVGQDSVPYMICLIHILEEWFGVEQLEDYLNFANYLLWVFTP. N-linked (GlcNAc...) asparagine glycosylation is present at asparagine 5. A helical transmembrane segment spans residues 51–71; it reads LILLILPYFTIFLLYLTIIFL. Residues 72-125 are Cytoplasmic-facing; sequence HIYKRKNVLKEAYSHNLWDGARKTVATLWDGHAAVWHGYEVHGMEKIPEDGPAL. The helical transmembrane segment at 126–146 threads the bilayer; the sequence is IIFYHGAIPIDFYYFMAKIFI. Residue histidine 130 is part of the active site. At 147–324 the chain is on the lumenal side; it reads HKGRTCRVVA…IMSALLERFH (178 aa).

This sequence belongs to the diacylglycerol acyltransferase family. Highly divergent.

It localises to the endoplasmic reticulum membrane. The catalysed reaction is a 1,2-diacylglycerol + a 1,2-diacyl-sn-glycero-3-phosphocholine = a triacylglycerol + a 1-acyl-sn-glycero-3-phosphocholine. It catalyses the reaction a 1-O-alkyl-2-acyl-sn-glycero-3-phosphocholine + a 1,2-diacylglycerol = a 1-O-alkyl-sn-glycero-3-phosphocholine + a triacylglycerol. It carries out the reaction a 2-acylglycerol + an acyl-CoA = a 1,2-diacylglycerol + CoA. The enzyme catalyses an acyl-CoA + a 1,2-diacyl-sn-glycerol = a triacyl-sn-glycerol + CoA. The catalysed reaction is 2-(9Z-octadecenoyl)-glycerol + (9Z)-octadecenoyl-CoA = 1,2-di-(9Z-octadecenoyl)-glycerol + CoA. It catalyses the reaction 1,2-di-(9Z-octadecenoyl)-sn-glycerol + (9Z)-octadecenoyl-CoA = 1,2,3-tri-(9Z-octadecenoyl)-glycerol + CoA. With respect to regulation, acyltransferase activity is specifically inhibited by TMX1 at the endoplasmic reticulum, restricting accumulation of triacylglycerol. Catalytic subunit of the alternative triglyceride biosynthesis pathway, which mediates formation of triacylglycerol from diacylglycerol and membrane phospholipids. Synthesizes triacylglycerol at the expense of membrane phospholipids, such as phosphatidylcholine (PC) and its ether-linked form (ePC), thereby altering the composition of membranes. The alternative triglyceride biosynthesis pathway is probably required to provide the energy required for rapid growth when fuel sources are limiting. It maintains mitochondrial function during periods of extracellular lipid starvation. Can also use acyl-CoA as donor: acts as a acyl-CoA:monoacylglycerol acyltransferase (MGAT), but also shows acyl-CoA:diacylglycerol acyltransferase (DGAT) activity. The sequence is that of DGAT1/2-independent enzyme synthesizing storage lipids from Homo sapiens (Human).